Reading from the N-terminus, the 401-residue chain is F-box protein At2g43440 (401 aa).

One can recognise an F-box domain in the interval 7-53 (NTNSIYIVPELLEDIFLRLPLKSILKFKTVSRQWRSILESKLFVERR).

The polypeptide is F-box protein At2g43440 (Arabidopsis thaliana (Mouse-ear cress)).